The sequence spans 355 residues: Probable butyrate kinase (355 aa).

It belongs to the acetokinase family.

It is found in the cytoplasm. The enzyme catalyses butanoate + ATP = butanoyl phosphate + ADP. This chain is Probable butyrate kinase, found in Listeria innocua serovar 6a (strain ATCC BAA-680 / CLIP 11262).